Consider the following 274-residue polypeptide: MQNITQSWFVQGMIKATTDAWLKGWDERNGGNLTLRLDDADIAPYHGNFHAQPRYIPLSQPMPLLANTPFIVTGSGKFFRNVQLDPAANLGVVKVDSDGAGYHILWGLTNEAVPTSELPAHFLSHCERIKATNGKDRVIMHCHATNLIALTYVLENDTAVFTRQLWEGSTECLVVFPDGVGILPWMVPGTDEIGQATAQEMQKHSLVLWPFHGVFGSGPTLDETFGLIDTAEKSAQVLVKVYSMGGMKQTISREELIALGQRFGVTPLASALAL.

Residue glutamate 117 is part of the active site. Residues histidine 141, histidine 143, and histidine 212 each contribute to the Zn(2+) site.

The protein belongs to the aldolase class II family. RhaD subfamily. As to quaternary structure, homotetramer. Requires Zn(2+) as cofactor.

The protein localises to the cytoplasm. It carries out the reaction L-rhamnulose 1-phosphate = (S)-lactaldehyde + dihydroxyacetone phosphate. It participates in carbohydrate degradation; L-rhamnose degradation; glycerone phosphate from L-rhamnose: step 3/3. Functionally, catalyzes the reversible cleavage of L-rhamnulose-1-phosphate to dihydroxyacetone phosphate (DHAP) and L-lactaldehyde. The polypeptide is Rhamnulose-1-phosphate aldolase (Escherichia coli O127:H6 (strain E2348/69 / EPEC)).